A 1194-amino-acid polypeptide reads, in one-letter code: Phosphatidylinositol-3,5-bisphosphate 3-phosphatase MTMR3 (1194 aa).

Serine 4 carries the phosphoserine modification. The 422-residue stretch at 151 to 572 (EHVTSRFKNE…RNLMLWSAVY (422 aa)) folds into the Myotubularin phosphatase domain. A 1,2-diacyl-sn-glycero-3-phospho-(1D-myo-inositol-3,5-bisphosphate) is bound by residues asparagine 322, asparagine 347, and isoleucine 348. 3 residues coordinate a 1,2-diacyl-sn-glycero-3-phospho-(1D-myo-inositol-3-phosphate): asparagine 322, asparagine 347, and isoleucine 348. Catalysis depends on cysteine 409, which acts as the Phosphocysteine intermediate. Residues serine 410, aspartate 411, glycine 412, tryptophan 413, aspartate 414, arginine 415, lysine 451, and arginine 455 each contribute to the a 1,2-diacyl-sn-glycero-3-phospho-(1D-myo-inositol-3,5-bisphosphate) site. 6 residues coordinate a 1,2-diacyl-sn-glycero-3-phospho-(1D-myo-inositol-3-phosphate): serine 410, aspartate 411, glycine 412, tryptophan 413, aspartate 414, and arginine 415. Arginine 455 lines the a 1,2-diacyl-sn-glycero-3-phospho-(1D-myo-inositol-3-phosphate) pocket. A disordered region spans residues 583–609 (DDSCAPYPAPGTSPDEPPLSRLPKTRS). Positions 589-599 (YPAPGTSPDEP) are enriched in pro residues. Serine 609, serine 629, serine 643, and serine 647 each carry phosphoserine. The span at 693 to 724 (TKEESGVEEPTHREHTEVPEVKEEAPLAKESR) shows a compositional bias: basic and acidic residues. Disordered regions lie at residues 693-731 (TKEESGVEEPTHREHTEVPEVKEEAPLAKESRTAAQGSG), 852-871 (ESGPQLHHRPCLASSGRFSG), and 876-897 (PIAPEPRSAERPQWDSVLHRTS). Position 725 is a phosphothreonine (threonine 725). Serine 904 is subject to Phosphoserine. Disordered stretches follow at residues 932–971 (NKASEQPAGFDTLQKYPTPNGHCANGETGRSKDSLSHQLS) and 988–1017 (KWLNSHSGRPSTTNSPEQPSRSHLDDDGMP). Polar residues predominate over residues 991–1006 (NSHSGRPSTTNSPEQP). Residues 1025 to 1058 (QRLRQIESGHQQEVETLKKQVQELKSRLESQYLT) are a coiled coil. Phosphoserine is present on serine 1060. Residues 1115 to 1175 (DHLAAHCYAC…VCKSCYSSLH (61 aa)) form an FYVE-type zinc finger. Cysteine 1121, cysteine 1124, cysteine 1137, cysteine 1140, cysteine 1145, cysteine 1148, cysteine 1167, and cysteine 1170 together coordinate Zn(2+).

It belongs to the protein-tyrosine phosphatase family. Non-receptor class myotubularin subfamily. As to quaternary structure, forms heterodimers with MTMR4 that recruit both CEP55 and PLK1; occurs during early mitosis, regulates the phosphorylation of CEP55 by PLK1 and its recruitment to the midbody where it mediates cell abscission.

The protein resides in the cytoplasm. It localises to the cytosol. The protein localises to the membrane. It carries out the reaction a 1,2-diacyl-sn-glycero-3-phospho-(1D-myo-inositol-3,5-bisphosphate) + H2O = a 1,2-diacyl-sn-glycero-3-phospho-(1D-myo-inositol-5-phosphate) + phosphate. It catalyses the reaction a 1,2-diacyl-sn-glycero-3-phospho-(1D-myo-inositol-3-phosphate) + H2O = a 1,2-diacyl-sn-glycero-3-phospho-(1D-myo-inositol) + phosphate. The catalysed reaction is 1,2-dihexadecanoyl-sn-glycero-3-phospho-(1D-myo-inositol-3-phosphate) + H2O = 1,2-dihexadecanoyl-sn-glycero-3-phospho-(1D-myo-inositol) + phosphate. The enzyme catalyses 1,2-dioctanoyl-sn-glycero-3-phospho-(1-D-myo-inositol-3-phosphate) + H2O = 1,2-dioctanoyl-sn-glycero-3-phospho-(1D-myo-inositol) + phosphate. It carries out the reaction 1,2-dihexadecanoyl-sn-glycero-3-phospho-(1D-myo-inositol-3,5-phosphate) + H2O = 1,2-dihexadecanoyl-sn-glycero-3-phospho-(1D-myo-inositol-5-phosphate) + phosphate. Functionally, lipid phosphatase that specifically dephosphorylates the D-3 position of phosphatidylinositol 3-phosphate and phosphatidylinositol 3,5-bisphosphate, generating phosphatidylinositol and phosphatidylinositol 5-phosphate. Decreases the levels of phosphatidylinositol 3-phosphate, a phospholipid found in cell membranes where it acts as key regulator of both cell signaling and intracellular membrane traffic. Could also have a molecular sequestering/adapter activity and regulate biological processes independently of its phosphatase activity. It includes the regulation of midbody abscission during mitotic cytokinesis. The polypeptide is Phosphatidylinositol-3,5-bisphosphate 3-phosphatase MTMR3 (Rattus norvegicus (Rat)).